The chain runs to 311 residues: Lipoyl synthase (311 aa).

The [4Fe-4S] cluster site is built by C47, C52, C58, C73, C77, C80, and S286. The region spanning 59–276 (WSRHTATYLA…RSVGESLGLF (218 aa)) is the Radical SAM core domain.

The protein belongs to the radical SAM superfamily. Lipoyl synthase family. It depends on [4Fe-4S] cluster as a cofactor.

Its subcellular location is the cytoplasm. It carries out the reaction [[Fe-S] cluster scaffold protein carrying a second [4Fe-4S](2+) cluster] + N(6)-octanoyl-L-lysyl-[protein] + 2 oxidized [2Fe-2S]-[ferredoxin] + 2 S-adenosyl-L-methionine + 4 H(+) = [[Fe-S] cluster scaffold protein] + N(6)-[(R)-dihydrolipoyl]-L-lysyl-[protein] + 4 Fe(3+) + 2 hydrogen sulfide + 2 5'-deoxyadenosine + 2 L-methionine + 2 reduced [2Fe-2S]-[ferredoxin]. It functions in the pathway protein modification; protein lipoylation via endogenous pathway; protein N(6)-(lipoyl)lysine from octanoyl-[acyl-carrier-protein]: step 2/2. Functionally, catalyzes the radical-mediated insertion of two sulfur atoms into the C-6 and C-8 positions of the octanoyl moiety bound to the lipoyl domains of lipoate-dependent enzymes, thereby converting the octanoylated domains into lipoylated derivatives. In Chlamydia trachomatis serovar L2 (strain ATCC VR-902B / DSM 19102 / 434/Bu), this protein is Lipoyl synthase.